Consider the following 509-residue polypeptide: Methionine--tRNA ligase (509 aa).

A 'HIGH' region motif is present at residues 12–22 (YYPSGDLHLGH). A 'KMSKS' region motif is present at residues 302 to 306 (KMSKS). Residue lysine 305 coordinates ATP.

This sequence belongs to the class-I aminoacyl-tRNA synthetase family. MetG type 2B subfamily. In terms of assembly, monomer.

It is found in the cytoplasm. It carries out the reaction tRNA(Met) + L-methionine + ATP = L-methionyl-tRNA(Met) + AMP + diphosphate. Functionally, is required not only for elongation of protein synthesis but also for the initiation of all mRNA translation through initiator tRNA(fMet) aminoacylation. In Mycoplasmopsis pulmonis (strain UAB CTIP) (Mycoplasma pulmonis), this protein is Methionine--tRNA ligase (metG).